A 465-amino-acid chain; its full sequence is Hexokinase-4 (465 aa).

The 445-residue stretch at 10–454 (ATKKEKVEQI…SGRGAALVSA (445 aa)) folds into the Hexokinase domain. A hexokinase small subdomain region spans residues 67–203 (EGSEVGDFLS…DFEMDVVAMV (137 aa)). 78–83 (DLGGTN) lines the ATP pocket. Substrate contacts are provided by residues 151-152 (SF), 168-169 (TK), and 204-205 (ND). Positions 204 to 443 (NDTVATMISC…CEITFIESEE (240 aa)) are hexokinase large subdomain. Thr-228 serves as a coordination point for ATP. Substrate contacts are provided by Asn-231, Glu-256, and Glu-290. Residues 295–296 (GK), 332–336 (TRFVS), and 411–415 (SVYKL) contribute to the ATP site.

It belongs to the hexokinase family. In terms of assembly, monomer. Interacts with MIDN; the interaction occurs preferentially at low glucose levels and results in inhibition of hexokinase activity. Interacts with GCKR; leading to sequestration in the nucleus.

Its subcellular location is the cytoplasm. The protein resides in the nucleus. It localises to the mitochondrion. It catalyses the reaction a D-hexose + ATP = a D-hexose 6-phosphate + ADP + H(+). The enzyme catalyses D-fructose + ATP = D-fructose 6-phosphate + ADP + H(+). It carries out the reaction D-glucose + ATP = D-glucose 6-phosphate + ADP + H(+). The catalysed reaction is D-mannose + ATP = D-mannose 6-phosphate + ADP + H(+). Its pathway is carbohydrate metabolism; hexose metabolism. The protein operates within carbohydrate degradation; glycolysis; D-glyceraldehyde 3-phosphate and glycerone phosphate from D-glucose: step 1/4. Subject to allosteric regulation. Low glucose and high fructose-6-phosphate triggers association with the inhibitor GCKR followed by sequestration in the nucleus. Its function is as follows. Catalyzes the phosphorylation of hexose, such as D-glucose, D-fructose and D-mannose, to hexose 6-phosphate (D-glucose 6-phosphate, D-fructose 6-phosphate and D-mannose 6-phosphate, respectively). Compared to other hexokinases, has a weak affinity for D-glucose, and is effective only when glucose is abundant. Mainly expressed in pancreatic beta cells and the liver and constitutes a rate-limiting step in glucose metabolism in these tissues. Since insulin secretion parallels glucose metabolism and the low glucose affinity of GCK ensures that it can change its enzymatic activity within the physiological range of glucose concentrations, GCK acts as a glucose sensor in the pancreatic beta cell. In pancreas, plays an important role in modulating insulin secretion. In liver, helps to facilitate the uptake and conversion of glucose by acting as an insulin-sensitive determinant of hepatic glucose usage. Required to provide D-glucose 6-phosphate for the synthesis of glycogen. Mediates the initial step of glycolysis by catalyzing phosphorylation of D-glucose to D-glucose 6-phosphate. This Mus musculus (Mouse) protein is Hexokinase-4.